The primary structure comprises 86 residues: Large ribosomal subunit protein bL27 (86 aa).

The protein belongs to the bacterial ribosomal protein bL27 family.

The protein is Large ribosomal subunit protein bL27 of Xanthomonas campestris pv. campestris (strain 8004).